The sequence spans 534 residues: Peptide chain release factor 3 (534 aa).

The tr-type G domain occupies 9-278 (ARRRTFAIIS…FFVEHAPPPQ (270 aa)). Residues 18–25 (SHPDAGKT), 86–90 (DTPGH), and 140–143 (NKLD) contribute to the GTP site.

It belongs to the TRAFAC class translation factor GTPase superfamily. Classic translation factor GTPase family. PrfC subfamily.

It is found in the cytoplasm. Increases the formation of ribosomal termination complexes and stimulates activities of RF-1 and RF-2. It binds guanine nucleotides and has strong preference for UGA stop codons. It may interact directly with the ribosome. The stimulation of RF-1 and RF-2 is significantly reduced by GTP and GDP, but not by GMP. In Xanthomonas campestris pv. campestris (strain 8004), this protein is Peptide chain release factor 3.